A 393-amino-acid chain; its full sequence is Putative bacilysin exporter BacE (393 aa).

10 helical membrane passes run 11–31 (LLFGQALSFMGDYCVLPALLI), 43–63 (SGVIAVRSIPMVFQPFLGVLV), 69–89 (VKIMLWTDVIRGVIFLGLTFL), 92–112 (GEYPLLFLALLFVSYGSGVFF), 133–155 (LFAKATTISIIVGAAAGGLFLLG), 160–177 (LAVAFNGVTYLVSAFFIS), 215–235 (MFTMITMALLWGVVYSYFPIV), 244–264 (IGNFILTFCIGFGGFIGAALV), 287–307 (ALFLFTPIFAVSVIAAILFFI), and 353–373 (IVDAAVIMAFIVLLVSGLFLH).

It belongs to the major facilitator superfamily.

The protein resides in the cell membrane. Functionally, part of the bacilysin biosynthesis operon. May be involved in self-resistance to bacilysin by permitting efflux of this antibiotic. This is Putative bacilysin exporter BacE (bacE) from Bacillus subtilis.